The sequence spans 406 residues: chitinase-like effector (406 aa).

The N-terminal stretch at 1–23 (MLTLLPSLILLLSTLSLSTPANA) is a signal peptide. The GH18 domain occupies 26–405 (AIAKAYYPGW…DAVRHGAGFK (380 aa)). Chitin is bound by residues Tyr-138 and Trp-384.

Belongs to the glycosyl hydrolase 18 family.

It is found in the secreted. Catalytically impaired chitinase that binds efficiently to chitin, but not to chitosan, xylan, or cellulose. Despite the lack of chitinolytic activity, retains substrate binding specificity and acts as an effector to prevent chitin-triggered immunity by sequestering immunogenic chitin fragments. This chain is chitinase-like effector (Chi), found in Moniliophthora roreri (Frosty pod rot fungus).